A 505-amino-acid polypeptide reads, in one-letter code: Argininosuccinate lyase (505 aa).

This sequence belongs to the lyase 1 family. Argininosuccinate lyase subfamily.

The protein resides in the cytoplasm. The enzyme catalyses 2-(N(omega)-L-arginino)succinate = fumarate + L-arginine. It participates in amino-acid biosynthesis; L-arginine biosynthesis; L-arginine from L-ornithine and carbamoyl phosphate: step 3/3. The chain is Argininosuccinate lyase from Rhodococcoides fascians (Rhodococcus fascians).